A 447-amino-acid chain; its full sequence is N-succinylarginine dihydrolase (447 aa).

Substrate contacts are provided by residues 19–28, N110, and 137–138; these read AGLSFGNEAS and HR. E174 is a catalytic residue. Residue R212 participates in substrate binding. H248 is an active-site residue. Residues D250 and N359 each contribute to the substrate site. The active-site Nucleophile is the C365.

This sequence belongs to the succinylarginine dihydrolase family. Homodimer.

The catalysed reaction is N(2)-succinyl-L-arginine + 2 H2O + 2 H(+) = N(2)-succinyl-L-ornithine + 2 NH4(+) + CO2. It functions in the pathway amino-acid degradation; L-arginine degradation via AST pathway; L-glutamate and succinate from L-arginine: step 2/5. Functionally, catalyzes the hydrolysis of N(2)-succinylarginine into N(2)-succinylornithine, ammonia and CO(2). The polypeptide is N-succinylarginine dihydrolase (Shigella boydii serotype 4 (strain Sb227)).